A 203-amino-acid polypeptide reads, in one-letter code: ATP-dependent Clp protease proteolytic subunit 1 (203 aa).

Residue Ser-102 is the Nucleophile of the active site. The active site involves His-127.

This sequence belongs to the peptidase S14 family. Fourteen ClpP subunits assemble into 2 heptameric rings which stack back to back to give a disk-like structure with a central cavity, resembling the structure of eukaryotic proteasomes.

The protein resides in the cytoplasm. It carries out the reaction Hydrolysis of proteins to small peptides in the presence of ATP and magnesium. alpha-casein is the usual test substrate. In the absence of ATP, only oligopeptides shorter than five residues are hydrolyzed (such as succinyl-Leu-Tyr-|-NHMec, and Leu-Tyr-Leu-|-Tyr-Trp, in which cleavage of the -Tyr-|-Leu- and -Tyr-|-Trp bonds also occurs).. Functionally, cleaves peptides in various proteins in a process that requires ATP hydrolysis. Has a chymotrypsin-like activity. Plays a major role in the degradation of misfolded proteins. The sequence is that of ATP-dependent Clp protease proteolytic subunit 1 from Rhizobium johnstonii (strain DSM 114642 / LMG 32736 / 3841) (Rhizobium leguminosarum bv. viciae).